Consider the following 80-residue polypeptide: Delta-actitoxin-Amc2a (80 aa).

The first 19 residues, 1–19 (MNKVLFLCLVVLCATSAFA), serve as a signal peptide directing secretion. The propeptide occupies 20–30 (AEEEYVERAPV). 3 cysteine pairs are disulfide-bonded: Cys-37–Cys-73, Cys-39–Cys-65, and Cys-55–Cys-74. Position 56 is a hydroxyproline (Pro-56).

This sequence belongs to the sea anemone type 3 (BDS) potassium channel toxin family.

The protein localises to the secreted. It localises to the nematocyst. Its function is as follows. Neurotoxon that induces paralysis when injected into crabs. The protein is Delta-actitoxin-Amc2a of Antheopsis maculata (Sea anemone).